Consider the following 224-residue polypeptide: Orotate phosphoribosyltransferase (224 aa).

5-phospho-alpha-D-ribose 1-diphosphate-binding positions include lysine 26, 73–74 (YK), arginine 100, lysine 101, lysine 104, histidine 106, and 127–135 (EDVTTAGTS). Residues threonine 131 and arginine 160 each coordinate orotate.

Belongs to the purine/pyrimidine phosphoribosyltransferase family. PyrE subfamily. As to quaternary structure, homodimer. The cofactor is Mg(2+).

The catalysed reaction is orotidine 5'-phosphate + diphosphate = orotate + 5-phospho-alpha-D-ribose 1-diphosphate. It functions in the pathway pyrimidine metabolism; UMP biosynthesis via de novo pathway; UMP from orotate: step 1/2. Its function is as follows. Catalyzes the transfer of a ribosyl phosphate group from 5-phosphoribose 1-diphosphate to orotate, leading to the formation of orotidine monophosphate (OMP). The chain is Orotate phosphoribosyltransferase from Clostridium acetobutylicum (strain ATCC 824 / DSM 792 / JCM 1419 / IAM 19013 / LMG 5710 / NBRC 13948 / NRRL B-527 / VKM B-1787 / 2291 / W).